We begin with the raw amino-acid sequence, 305 residues long: Ribonuclease BN (305 aa).

Zn(2+) contacts are provided by His-64, His-66, Asp-68, His-69, His-141, Asp-212, and His-270. Catalysis depends on Asp-68, which acts as the Proton acceptor.

This sequence belongs to the RNase Z family. RNase BN subfamily. Homodimer. The cofactor is Zn(2+).

In terms of biological role, zinc phosphodiesterase, which has both exoribonuclease and endoribonuclease activities. This chain is Ribonuclease BN, found in Escherichia coli O17:K52:H18 (strain UMN026 / ExPEC).